Here is a 147-residue protein sequence, read N- to C-terminus: Sentan (147 aa).

Residues 14 to 34 (RLEGEPNPPAAPTSTLAPKNM) form a disordered region. Positions 25–34 (PTSTLAPKNM) are enriched in polar residues.

The protein belongs to the S-100 family.

Its subcellular location is the cell projection. It is found in the cilium. In terms of biological role, may be a component of the linker structure that bridges the ciliary membrane and peripheral singlet microtubules. The polypeptide is Sentan (SNTN) (Bos taurus (Bovine)).